The chain runs to 136 residues: Large-conductance mechanosensitive channel (136 aa).

Transmembrane regions (helical) follow at residues 9–29 (AFAS…GAAF) and 79–99 (IQTV…LKAI).

Belongs to the MscL family. As to quaternary structure, homopentamer.

It is found in the cell inner membrane. Functionally, channel that opens in response to stretch forces in the membrane lipid bilayer. May participate in the regulation of osmotic pressure changes within the cell. The polypeptide is Large-conductance mechanosensitive channel (Shewanella sp. (strain W3-18-1)).